The following is a 144-amino-acid chain: UPF0735 ACT domain-containing protein NT01CX_1681 (144 aa).

Residues 68–143 enclose the ACT domain; that stretch reads TIGFLLSHKA…NVVKVSLIAM (76 aa).

Belongs to the UPF0735 family.

This is UPF0735 ACT domain-containing protein NT01CX_1681 from Clostridium novyi (strain NT).